The primary structure comprises 275 residues: MLLHLILILKSFLPKRNLAFRYDIVALSLTRKILLKHQPPENVFAALYIDSLHGGRHQIMPGFCKLSCPTLDVGPGLGRFAASHFSERVSQDRQAQGRERRSVLLPQERRGSSGRQPLYSLLPHRPKREGVIGAALCYTSASHSLSPAALLPPVGRGKDRRCGRQVGAAGLLRHVGRRRQFAQLTRGPLGLPCALLEPLPLDPHLLDKGRDVGVGGCHDHQGQEDGLLLHGGPEPVLGPQGVIGPAYGRPHANVHALRHELQHGPLGDPPRLRSG.

Residues 88–111 show a composition bias toward basic and acidic residues; sequence RVSQDRQAQGRERRSVLLPQERRG. Positions 88-120 are disordered; the sequence is RVSQDRQAQGRERRSVLLPQERRGSSGRQPLYS.

Belongs to the 'phage' integrase family.

Functionally, integrase-recombinase proteins are responsible for catalyzing strand exchange between DNA molecules and play an important role in the DNA replication. May be required for the formation of concatameric complex replicative intermediates and/or their resolution before encapsidation. This Dryophytes versicolor (chameleon treefrog) protein is Integrase homolog (INT).